The primary structure comprises 486 residues: Kynurenine 3-monooxygenase (486 aa).

2 helical membrane-spanning segments follow: residues 401 to 424 and 437 to 459; these read LLFWMMPNTWVPLYNSVSFSHMRY and ILTRVLYGASIASVAAIGGLCYR.

This sequence belongs to the aromatic-ring hydroxylase family. KMO subfamily. Requires FAD as cofactor.

It localises to the mitochondrion. It is found in the membrane. The catalysed reaction is L-kynurenine + NADPH + O2 + H(+) = 3-hydroxy-L-kynurenine + NADP(+) + H2O. It participates in cofactor biosynthesis; NAD(+) biosynthesis; quinolinate from L-kynurenine: step 1/3. Functionally, catalyzes the hydroxylation of L-kynurenine (L-Kyn) to form 3-hydroxy-L-kynurenine (L-3OHKyn). Required for synthesis of quinolinic acid. The chain is Kynurenine 3-monooxygenase (kh) from Anopheles gambiae (African malaria mosquito).